The primary structure comprises 382 residues: Lactaldehyde reductase (382 aa).

Residues Asp-38, Asn-70, 97-98 (GS), 139-143 (TTAGT), Asn-150, Lys-161, and 180-184 (MMDGM) contribute to the NAD(+) site. Positions 195, 199, 262, and 276 each coordinate Fe cation.

The protein belongs to the iron-containing alcohol dehydrogenase family. Homodimer. It depends on Fe cation as a cofactor.

It carries out the reaction (R)-propane-1,2-diol + NAD(+) = (R)-lactaldehyde + NADH + H(+). It catalyses the reaction (S)-propane-1,2-diol + NAD(+) = (S)-lactaldehyde + NADH + H(+). Its pathway is carbohydrate degradation; L-fucose degradation. The sequence is that of Lactaldehyde reductase (fucO) from Escherichia coli O157:H7.